The following is a 333-amino-acid chain: DNA-directed RNA polymerase subunit alpha (333 aa).

The interval 1-234 is alpha N-terminal domain (alpha-NTD); sequence MQISVNEFLT…QQLAAFVDLK (234 aa). The tract at residues 248–333 is alpha C-terminal domain (alpha-CTD); that stretch reads IDPILLRPVD…SLKKDDKATA (86 aa).

It belongs to the RNA polymerase alpha chain family. Homodimer. The RNAP catalytic core consists of 2 alpha, 1 beta, 1 beta' and 1 omega subunit. When a sigma factor is associated with the core the holoenzyme is formed, which can initiate transcription.

It catalyses the reaction RNA(n) + a ribonucleoside 5'-triphosphate = RNA(n+1) + diphosphate. DNA-dependent RNA polymerase catalyzes the transcription of DNA into RNA using the four ribonucleoside triphosphates as substrates. This is DNA-directed RNA polymerase subunit alpha from Pseudomonas fluorescens (strain ATCC BAA-477 / NRRL B-23932 / Pf-5).